The following is a 382-amino-acid chain: Cytoplasmic tRNA 2-thiolation protein 2 (382 aa).

It belongs to the CTU2/NCS2 family.

The protein localises to the cytoplasm. Its pathway is tRNA modification; 5-methoxycarbonylmethyl-2-thiouridine-tRNA biosynthesis. Functionally, plays a central role in 2-thiolation of mcm(5)S(2)U at tRNA wobble positions of tRNA(Lys), tRNA(Glu) and tRNA(Gln). May act by forming a heterodimer with NCS6 that ligates sulfur from thiocarboxylated URM1 onto the uridine of tRNAs at wobble position. Prior mcm(5) tRNA modification by the elongator complex is required for 2-thiolation. May also be involved in protein urmylation. The sequence is that of Cytoplasmic tRNA 2-thiolation protein 2 from Phaeosphaeria nodorum (strain SN15 / ATCC MYA-4574 / FGSC 10173) (Glume blotch fungus).